We begin with the raw amino-acid sequence, 429 residues long: Ribosomal RNA small subunit methyltransferase B (429 aa).

S-adenosyl-L-methionine contacts are provided by residues 254–260 (CAAPGGK), Asp-277, Asp-303, and Asp-322. Cys-375 serves as the catalytic Nucleophile. The tract at residues 397 to 419 (ALSETGTPDQPGQQNLPGGEEGD) is disordered. Residues 400–412 (ETGTPDQPGQQNL) show a composition bias toward polar residues.

The protein belongs to the class I-like SAM-binding methyltransferase superfamily. RsmB/NOP family.

The protein localises to the cytoplasm. It carries out the reaction cytidine(967) in 16S rRNA + S-adenosyl-L-methionine = 5-methylcytidine(967) in 16S rRNA + S-adenosyl-L-homocysteine + H(+). In terms of biological role, specifically methylates the cytosine at position 967 (m5C967) of 16S rRNA. The protein is Ribosomal RNA small subunit methyltransferase B of Salmonella paratyphi B (strain ATCC BAA-1250 / SPB7).